Consider the following 203-residue polypeptide: UPF0637 protein SH1846 (203 aa).

This sequence belongs to the UPF0637 family.

The sequence is that of UPF0637 protein SH1846 from Staphylococcus haemolyticus (strain JCSC1435).